Consider the following 341-residue polypeptide: uncharacterized protein (341 aa).

WD repeat units lie at residues 19–59, 106–145, 252–293, and 303–341; these read SLGS…QVHT, GHTDIVSSIEVSPIEDQFVSTANDKTLKLWKMNQSSRCLG, PFSN…HHKG, and VSQSIINPGLVKYNPRYDQLLTAGSQLVFWLPEKYALTS.

The protein resides in the cytoplasm. It is found in the nucleus. This is an uncharacterized protein from Schizosaccharomyces pombe (strain 972 / ATCC 24843) (Fission yeast).